Reading from the N-terminus, the 331-residue chain is Adenosine deaminase (331 aa).

Zn(2+)-binding residues include histidine 12 and histidine 14. Substrate is bound by residues histidine 14, aspartate 16, and glycine 170. Residue histidine 197 coordinates Zn(2+). The active-site Proton donor is glutamate 200. Residue aspartate 278 participates in Zn(2+) binding. Aspartate 279 provides a ligand contact to substrate.

The protein belongs to the metallo-dependent hydrolases superfamily. Adenosine and AMP deaminases family. Adenosine deaminase subfamily. Requires Zn(2+) as cofactor.

The enzyme catalyses adenosine + H2O + H(+) = inosine + NH4(+). The catalysed reaction is 2'-deoxyadenosine + H2O + H(+) = 2'-deoxyinosine + NH4(+). Functionally, catalyzes the hydrolytic deamination of adenosine and 2-deoxyadenosine. The chain is Adenosine deaminase from Shewanella baltica (strain OS223).